Reading from the N-terminus, the 460-residue chain is UDP-N-acetylmuramate--L-alanine ligase (460 aa).

119–125 (GSHGKTT) is an ATP binding site.

It belongs to the MurCDEF family.

Its subcellular location is the cytoplasm. It catalyses the reaction UDP-N-acetyl-alpha-D-muramate + L-alanine + ATP = UDP-N-acetyl-alpha-D-muramoyl-L-alanine + ADP + phosphate + H(+). It functions in the pathway cell wall biogenesis; peptidoglycan biosynthesis. Functionally, cell wall formation. The protein is UDP-N-acetylmuramate--L-alanine ligase of Alkaliphilus metalliredigens (strain QYMF).